Reading from the N-terminus, the 148-residue chain is Aspartate carbamoyltransferase regulatory chain (148 aa).

The Zn(2+) site is built by C106, C111, C134, and C137.

It belongs to the PyrI family. Contains catalytic and regulatory chains. Requires Zn(2+) as cofactor.

Its function is as follows. Involved in allosteric regulation of aspartate carbamoyltransferase. This Methanococcus maripaludis (strain C6 / ATCC BAA-1332) protein is Aspartate carbamoyltransferase regulatory chain.